A 1883-amino-acid chain; its full sequence is AF4/FMR2 family member lilli (1883 aa).

Residues Met-1 to Asn-45 show a composition bias toward low complexity. Disordered regions lie at residues Met-1 to Asp-88, Ile-140 to Ile-311, Ser-329 to Thr-381, Met-449 to His-540, Leu-609 to Arg-654, Ser-796 to Ile-827, Met-844 to Ala-901, Thr-922 to Gly-962, Val-992 to Ala-1018, Thr-1039 to Thr-1075, Lys-1115 to Gln-1145, Gln-1170 to Lys-1238, Tyr-1358 to Thr-1413, Glu-1450 to Ser-1510, Ala-1543 to Thr-1583, Gln-1595 to Asp-1641, and Pro-1783 to Pro-1803. Basic and acidic residues predominate over residues Arg-57–Arg-80. Composition is skewed to low complexity over residues Ile-140–Pro-154, Gln-161–Gln-178, Ser-223–Ala-253, and Pro-362–Thr-381. Positions Pro-450 to Ala-462 are enriched in pro residues. At Thr-458 the chain carries Phosphothreonine. Basic and acidic residues predominate over residues Leu-466–Ser-479. The span at Leu-481–Asp-491 shows a compositional bias: acidic residues. Phosphoserine is present on residues Ser-488 and Ser-490. The segment covering Ser-500–His-540 has biased composition (low complexity). Positions Leu-609 to Ser-625 are enriched in gly residues. 2 stretches are compositionally biased toward low complexity: residues Ser-626–Asn-639 and Ser-796–Gly-813. Over residues Pro-867–Met-877 the composition is skewed to basic residues. Residues Ser-887 and Ser-888 each carry the phosphoserine modification. Residues Lys-930–Gln-942 constitute a DNA-binding region (a.T hook). Residues Gln-939–Gly-962 are compositionally biased toward low complexity. Ser-953 and Ser-955 each carry phosphoserine. Composition is skewed to low complexity over residues Ser-1124–Gln-1145, Gln-1170–Gln-1186, Ser-1200–Ser-1222, Gln-1362–His-1376, and His-1385–Gln-1399. A compositionally biased stretch (basic and acidic residues) spans Glu-1450–Tyr-1467. Residue Ser-1546 is modified to Phosphoserine. Position 1548 is a phosphothreonine (Thr-1548). 2 stretches are compositionally biased toward low complexity: residues Gln-1558 to Thr-1583 and Gln-1595 to Thr-1606. A compositionally biased stretch (pro residues) spans Thr-1614 to Arg-1625. Low complexity predominate over residues Pro-1783–Ser-1794.

The protein belongs to the AF4 family.

It is found in the nucleus. Has a role in transcriptional regulation. Acts in parallel with the Ras/MAPK and the PI3K/PKB pathways in the control of cell identity and cellular growth. Essential for regulation of the cytoskeleton and cell growth but not for cell proliferation or growth rate. Required specifically for the microtubule-based basal transport of lipid droplets. Plays a partially redundant function downstream of Raf in cell fate specification in the developing eye. Pair-rule protein that regulates embryonic cellularization, gastrulation and segmentation. This is AF4/FMR2 family member lilli from Drosophila grimshawi (Hawaiian fruit fly).